Consider the following 218-residue polypeptide: Sodium channel regulatory subunit beta-1 (218 aa).

A signal peptide spans 1-18 (MGTLLALVVGAVLVSSAW). Residues 19 to 157 (GGCVEVDSET…DKANRDMASI (139 aa)) are Extracellular-facing. Intrachain disulfides connect Cys-21–Cys-43 and Cys-40–Cys-121. One can recognise an Ig-like C2-type domain in the interval 22 to 150 (VEVDSETEAV…KIHLEVVDKA (129 aa)). Residues Asn-93, Asn-110, Asn-114, and Asn-135 are each glycosylated (N-linked (GlcNAc...) asparagine). Residues 158-179 (VSEIMMYVLIVVLTIWLVAEMV) form a helical membrane-spanning segment. Residues 180-218 (YCYKKIAAATEAAAQENASEYLAITSESKENCTGVQVAE) are Cytoplasmic-facing.

Belongs to the sodium channel auxiliary subunit SCN1B (TC 8.A.17) family. A voltage-gated sodium (Nav) channel consists of an ion-conducting pore-forming alpha subunit functional on its own that is regulated by one or more beta subunits. Interacts with SCN1A; regulatory subunit of SCN1A/Nav1.1. Interacts with SCN3A; regulatory subunit of SCN3A/Nav1.3. Interacts with SCN4A; regulatory subunit of SCN4A/Nav1.4. Interacts with SCN5A; regulatory subunit of SCN5A/Nav1.5. Interacts with SCN8A; regulatory subunit of SCN8A/Nav1.6. Interacts with SCN9A; regulatory subunit of SCN9A/Nav1.7. Interacts with SCN10A; regulatory subunit of SCN10A/Nav1.8. Interacts with NFASC. Interacts with TMEM65. Detected in brain (at protein level). Expressed in brain, heart, skeletal muscle and spinal cord.

Its subcellular location is the cell membrane. It is found in the perikaryon. The protein localises to the cell projection. The protein resides in the axon. Functionally, regulatory subunit of multiple voltage-gated sodium (Nav) channels directly mediating the depolarization of excitable membranes. Navs, also called VGSCs (voltage-gated sodium channels) or VDSCs (voltage-dependent sodium channels), operate by switching between closed and open conformations depending on the voltage difference across the membrane. In the open conformation they allow Na(+) ions to selectively pass through the pore, along their electrochemical gradient. The influx of Na+ ions provokes membrane depolarization, initiating the propagation of electrical signals throughout cells and tissues. The accessory beta subunits participate in localization and functional modulation of the Nav channels. Modulates the activity of SCN1A/Nav1.1, SCN2A/Nav1.2, SCN3A/Nav1.3, SCN4A/Nav1.4, SCN5A/Nav1.5, SCN8A/Nav1.6, SCN9A/Nav1.7 and SCN10A/Nav1.8. The protein is Sodium channel regulatory subunit beta-1 of Rattus norvegicus (Rat).